A 304-amino-acid polypeptide reads, in one-letter code: UDP-3-O-acyl-N-acetylglucosamine deacetylase (304 aa).

Zn(2+)-binding residues include H79, H238, and D242. Residue H265 is the Proton donor of the active site.

Belongs to the LpxC family. The cofactor is Zn(2+).

It carries out the reaction a UDP-3-O-[(3R)-3-hydroxyacyl]-N-acetyl-alpha-D-glucosamine + H2O = a UDP-3-O-[(3R)-3-hydroxyacyl]-alpha-D-glucosamine + acetate. The protein operates within glycolipid biosynthesis; lipid IV(A) biosynthesis; lipid IV(A) from (3R)-3-hydroxytetradecanoyl-[acyl-carrier-protein] and UDP-N-acetyl-alpha-D-glucosamine: step 2/6. Catalyzes the hydrolysis of UDP-3-O-myristoyl-N-acetylglucosamine to form UDP-3-O-myristoylglucosamine and acetate, the committed step in lipid A biosynthesis. This chain is UDP-3-O-acyl-N-acetylglucosamine deacetylase, found in Laribacter hongkongensis (strain HLHK9).